We begin with the raw amino-acid sequence, 316 residues long: Very long chain fatty acid elongase 6 (316 aa).

An N-linked (GlcNAc...) asparagine glycan is attached at Asn-11. The next 6 membrane-spanning stretches (helical) occupy residues 30–50 (WMLENWTWVFYYCGIYMLVIF), 64–84 (LRGPLIIWNTLLAMFSIMGAA), 117–137 (FWTWLFVLSKLPELGDTIFIV), 142–162 (PLIFLHWYHHITVLIYSWFSY), 167–189 (SSARWFIVMNYCVHSVMYSYYAL), and 202–222 (MIITSLQLAQMIIGCAINVWA). Asn-242 carries an N-linked (GlcNAc...) asparagine glycan. A helical membrane pass occupies residues 245–265 (IAMYSSYFVLFARFFYKAYLA).

It belongs to the ELO family. ELOVL6 subfamily. As to expression, detected in the CNS (central nervous system) of third larval instar (at protein level). Expressed in cyst progenitor cells (at protein level). In the adult fly, expressed in several tissues including, sperm, follicular epithelium, nurse cells and cyst cells.

The protein localises to the mitochondrion outer membrane. It localises to the endoplasmic reticulum membrane. The enzyme catalyses a very-long-chain acyl-CoA + malonyl-CoA + H(+) = a very-long-chain 3-oxoacyl-CoA + CO2 + CoA. It catalyses the reaction hexadecanoyl-CoA + malonyl-CoA + H(+) = 3-oxooctadecanoyl-CoA + CO2 + CoA. It participates in lipid metabolism; fatty acid biosynthesis. In terms of biological role, catalyzes the first and rate-limiting reaction of the four reactions that constitute the long-chain fatty acids elongation cycle. This process allows the addition of 2 carbons to the chain of long- and very long-chain fatty acids (VLCFAs) per cycle. Condensing enzyme that elongates fatty acids with 12, 14 and 16 carbons with higher activity toward C16:0 acyl-CoAs. Catalyzes the synthesis of unsaturated C16 long chain fatty acids and, to a lesser extent, C18:0 and those with low desaturation degree. May participate in the production of saturated and monounsaturated VLCFAs of different chain lengths that are involved in multiple biological processes as precursors of membrane lipids and lipid mediators. The sequence is that of Very long chain fatty acid elongase 6 from Drosophila melanogaster (Fruit fly).